The following is a 360-amino-acid chain: DNA ADP-ribosyl glycohydrolase (360 aa).

The Macro domain maps to 1–155 (MLRFVRGNLL…VYEPVENPKA (155 aa)). ADP-D-ribose is bound by residues 8–9 (NL), 20–22 (TVN), 31–34 (VALQ), and threonine 79. The active-site Nucleophile is the lysine 80. Position 117-121 (117-121 (GAGNG)) interacts with ADP-D-ribose. The tract at residues 167-338 (LTPARAALLK…VALDALLKRG (172 aa)) is interaction with DarT.

It belongs to the DarG ADP-ribosyl glycohydrolase family. As to quaternary structure, interacts (via C-terminus) with cognate toxin DarT; this heterodimeric complex neutralizes the toxic effect of DarT by preventing ssDNA binding to DarT and consequently inactivating the toxin by direct protein-protein interactions.

It carries out the reaction an N-(ADP-alpha-D-ribosyl)-thymidine in DNA + H2O = a thymidine in DNA + ADP-D-ribose. Antitoxin component of the hybrid type II/IV toxin-antitoxin (TA) system DarTG, which plays a crucial role in controlling bacterial growth and bacteriophage infection. De-ADP-ribosylates DNA modified on thymidine by its cognate toxin DarT, which neutralizes the activity of cognate toxin DarT. Upon expression in E.coli neutralizes the effect of cognate toxin DarT. Upon expression in M.tuberculosis neutralizes the toxic effects of endogenous DarT. The chain is DNA ADP-ribosyl glycohydrolase from Thermus aquaticus (strain ATCC BAA-2747 / Y51MC23).